The following is a 320-amino-acid chain: Polyprenyl transferase pyr6 (320 aa).

6 helical membrane-spanning segments follow: residues 22–42, 60–80, 101–121, 127–147, 155–175, and 186–206; these read KYNC…AAAS, GLAF…NDWI, LATR…VWLM, GQNL…YPFG, LGIY…LPAW, and PDLL…TIYF. N224 is a glycosylation site (N-linked (GlcNAc...) asparagine). Residues 233–253 form a helical membrane-spanning segment; that stretch reads YVHGLLLLQAVAVVMVIPWIL. N-linked (GlcNAc...) asparagine glycosylation occurs at N256. The next 2 helical transmembrane spans lie at 260 to 280 and 296 to 316; these read WLWF…LYLF and FALG…VSGS.

Belongs to the UbiA prenyltransferase family. Mg(2+) is required as a cofactor.

Its subcellular location is the membrane. The enzyme catalyses 4-hydroxy-6-(pyridin-3-yl)-2H-pyran-2-one + (2E,6E)-farnesyl diphosphate = 4-hydroxy-3-[(2E,6E)-farnesyl]-6-(pyridin-3-yl)-2H-pyran-2-one + diphosphate. Its pathway is secondary metabolite biosynthesis; terpenoid biosynthesis. Functionally, polyprenyl transferase; part of the gene cluster that mediates the biosynthesis of pyripyropene A, a specific human acyl-coenzyme A:cholesterol acyltransferase 2 inhibitor. The first step of the pathway is the synthesis of nicotinyl-CoA from nicotinic acid by the nicotinic acid-CoA ligase pyr1. Nicotinyl-CoA is then a substrate of polyketide synthase pyr2 to produce 4-hydroxy-6-(3-pyridinyl)-2H-pyran-2-one (HPPO) which is further prenylated by the polyprenyl transferase pyr6 to yield farnesyl-HPPO. The next steps consist of an epoxidation of farnesyl-HPPO to epoxyfarnesyl-HPPO by FAD-dependent monooxygenase pyr5 and a cyclization of the terpenoid portion by the terpene cyclase pyr4 to yield deacetyl-pyripyropene E. The 2 cytochrome P450 monooxygenases pyr3 and pyr9, and the 2 acetyltransferases pyr7 and pyr8 are involved in the conversion of deacetyl-pyripyropene E into pyripyropene A through several cycles of oxidation and acetylation steps. Pyr7 acetylates deacetyl-pyripyropene E to pyripyropene E which is oxidized to 11-deacetyl-pyripyropene O by pyr3, which is in turn acetylated into pyripyropene O by pyr8. Pyripyropene O is then oxidized to deacetyl-pyripyropene A by pyr9. Deacetyl-pyripyropene A is finally acetylated to pyripyropene A by pyr8. This is Polyprenyl transferase pyr6 from Aspergillus fumigatus (strain ATCC MYA-4609 / CBS 101355 / FGSC A1100 / Af293) (Neosartorya fumigata).